The primary structure comprises 2449 residues: Nonribisomal peptide synthetase phqB (2449 aa).

The interval 253–654 (IQVHSGPGRL…GRRDTVVKIR (402 aa)) is adenylation 1. Residues 795–870 (LPMTPNEDVL…LRTVAKEARP (76 aa)) enclose the Carrier 1 domain. Serine 815 is subject to O-(pantetheine 4'-phosphoryl)serine. A condensation 1 region spans residues 913 to 1337 (QDIYPTTPLQ…LISDRDSELL (425 aa)). The tract at residues 1357–1756 (EAQVTRNPSK…TFTFLGRTNQ (400 aa)) is adenylation 2. Residues 1915–1993 (WALSKHIGQL…MVAEMIDRTP (79 aa)) enclose the Carrier 2 domain. O-(pantetheine 4'-phosphoryl)serine is present on serine 1952. The interval 2041–2297 (LTGATGFLGT…VAAVDWVASL (257 aa)) is reductase (R) domain. Positions 2045, 2249, and 2259 each coordinate NADPH.

The protein belongs to the NRP synthetase family.

It participates in alkaloid biosynthesis. In terms of biological role, nonribisomal peptide synthetase; part of the gene cluster that mediates the biosynthesis of paraherquamide, a fungal indole alkaloid that belongs to a family of natural products containing a characteristic bicyclo[2.2.2]diazaoctane core. The first steps in the biosynthesis of paraherquamide is the production of the beta-methyl-proline precursor from L-isoleucine. They require oxidation of a terminally hydroxylated L-isoleucine to the corresponding aldehyde by enzymes which have still to be identified. Spontaneous cyclization and dehydration would yield the 4-methyl pyrolline-5-carboxylic acid, which is then reduced by the pyrroline-5-carboxylate reductase phqD leading to the beta-methyl-proline precursor. The next step of paraherquamide biosynthesis involves coupling of beta-methyl-proline and L-tryptophan by the bimodular NRPS phqB, to produce a monooxopiperazine intermediate. The reductase (R) domain of phqB utilizes NADPH for hydride transfer to reduce the thioester bond of the T domain-tethered linear dipeptide to a hemithioaminal intermediate, which spontaneously cleaves the C-S bond to release the aldehyde product. This compound undergoes spontaneous cyclization and dehydration to give a dienamine which is reverse prenylated at C-2 by the reverse prenyltransferase phqJ. The other prenyltransferase present in the cluster, phqI may be a redundant gene in the pathway. During biosynthetic assembly, the key step to produce the polycyclic core is catalyzed by the bifunctional reductase and intramolecular [4+2] Diels-Alderase, phqE, resulting in formation of the [2.2.2] diazaoctane intermediate preparaherquamide. Following formation of preparaherquamide, an indole 2,3-epoxidation-initiated pinacol-like rearrangement is catalyzed by the phqK FAD-dependent monooxygenase. The prenyltransferase phqA, the cytochrome P450 monooxygenase phqL, and the FAD-linked oxidoreductase phqH (or the cytochrome P450 monooxygenase phqM), are proposed to be involved in the formation of the pyran ring. The FAD-dependent monooxygenase phqK is likely responsible for generation of the spiro-oxindole, and the N-methylation is likely mediated by the phqN methyltransferase leading to the isolable natural product paraherquamide F. However, the order of these biosynthetic steps has still to be determined. In late-stage paraherquamide biosynthesis, the third P450 monooxygenase, phqO, is probably responsible for the C-14 hydroxylation, transforming paraherquamide F to paraherquamide G, and paraherquamide E to the final product paraherquamide A. The expansion from the 6-membered ring pyran (in paraherquamides F and G) to the 7-membered dioxepin ring (in paraherquamides A and E) represents a poorly understood but intriguing process that probably involves the 2-oxoglutarate-dependent dioxygenase phqC. Finally, the remaining members of the paraherquamide cluster, including phqI as well as phqM (or phqH), do not have a clearly prescribed role and appear to be redundant. This Penicillium fellutanum protein is Nonribisomal peptide synthetase phqB.